Consider the following 144-residue polypeptide: Small ribosomal subunit protein eS19A (144 aa).

Residues 83–102 (VNRGMRPSHHRDGSGSVQRK) form a disordered region.

Belongs to the eukaryotic ribosomal protein eS19 family. As to quaternary structure, component of the small ribosomal subunit (SSU). Mature yeast ribosomes consist of a small (40S) and a large (60S) subunit. The 40S small subunit contains 1 molecule of ribosomal RNA (18S rRNA) and at least 33 different proteins. The large 60S subunit contains 3 rRNA molecules (25S, 5.8S and 5S rRNA) and at least 46 different proteins.

It is found in the cytoplasm. It localises to the nucleus. The protein localises to the nucleolus. Its function is as follows. Component of the ribosome, a large ribonucleoprotein complex responsible for the synthesis of proteins in the cell. The small ribosomal subunit (SSU) binds messenger RNAs (mRNAs) and translates the encoded message by selecting cognate aminoacyl-transfer RNA (tRNA) molecules. The large subunit (LSU) contains the ribosomal catalytic site termed the peptidyl transferase center (PTC), which catalyzes the formation of peptide bonds, thereby polymerizing the amino acids delivered by tRNAs into a polypeptide chain. The nascent polypeptides leave the ribosome through a tunnel in the LSU and interact with protein factors that function in enzymatic processing, targeting, and the membrane insertion of nascent chains at the exit of the ribosomal tunnel. eS19 is required for proper maturation of the small (40S) ribosomal subunit. Binds to 40S pre-ribosomal particles, probably required after association of NOC4 but before association of ENP1, TSR1 and RIO2 with 20/21S pre-rRNA. In Schizosaccharomyces pombe (strain 972 / ATCC 24843) (Fission yeast), this protein is Small ribosomal subunit protein eS19A (rps1901).